The sequence spans 733 residues: Tyrosine-protein kinase ptk (733 aa).

2 helical membrane passes run 19 to 39 and 438 to 458; these read LFFSLIAQWKLIALCIILSLI and LQILILSIFLGGFLGTLLALL. 542–550 serves as a coordination point for ATP; it reads GPAPEVGKS.

This sequence belongs to the etk/wzc family. Mg(2+) is required as a cofactor. Mn(2+) serves as cofactor. In terms of processing, autophosphorylated on several Tyr residues. Dephosphorylated by ptp.

The protein resides in the cell inner membrane. It catalyses the reaction L-tyrosyl-[protein] + ATP = O-phospho-L-tyrosyl-[protein] + ADP + H(+). It functions in the pathway glycan metabolism; exopolysaccharide biosynthesis. In terms of biological role, may be involved in the production and the transport of exopolysaccharides. In Acinetobacter johnsonii, this protein is Tyrosine-protein kinase ptk (ptk).